Reading from the N-terminus, the 428-residue chain is Ribosome biogenesis protein WDR12 homolog (428 aa).

The segment at 13 to 97 is ubiquitin-like (UBL) domain; it reads LQVHFTTKQK…EDTIELEYVE (85 aa). 7 WD repeats span residues 109–146, 148–190, 197–236, 259–297, 299–338, 344–384, and 388–426; these read LHDDWVSAVQAKDGWILTGTYDNTVNLWNTKGKHKLTI, GHVA…NTAE, GHERGVGCIAVNPAKTQMASGSMDTMLKIWSTELQADKGE, GHREFVSGVQWIDNTTIATCSWDHTIKLWDLSMGGIKTE, TGNKSFFDLSYSPLNGMIITASPDKNLRLYDPRSKHGNFV, GHSQ…APIF, and GHEDKVLACDWSNPKYILSGGSDNAVRVFKSRIAVDNTK.

Belongs to the WD repeat WDR12/YTM1 family.

It is found in the nucleus. The protein localises to the nucleolus. The protein resides in the nucleoplasm. Required for maturation of ribosomal RNAs and formation of the large ribosomal subunit. In Anopheles gambiae (African malaria mosquito), this protein is Ribosome biogenesis protein WDR12 homolog.